The sequence spans 295 residues: MTKLIVICGATATGKSGLALNLAMRLGSVILSADSRQVYREFDIGTAKPTLAEQRAVPHYLIDICAPRETMTVADYQEQAQALINSLPVSPLLLVGGTGLYIRSIVQGMKIPRVAPNYELRSQLASLGQTTLYGILQQVDPIAAQKIHPNDPVRTLRAVEVFYITGIPISAQQGENPPDYPILQIGLDCEMERLTERIHKRTEQMITDGLVGEVEYLCQKYGAELPLLNTLGYQEIKQYLTGEISLEAAKELTVLHTRQFAKRQRTWFRASPQIEWFNADHPDLLDIVCQHIQQP.

9–16 (GATATGKS) serves as a coordination point for ATP. Substrate is bound at residue 11–16 (TATGKS). Positions 34 to 37 (DSRQ) are interaction with substrate tRNA.

It belongs to the IPP transferase family. In terms of assembly, monomer. It depends on Mg(2+) as a cofactor.

It carries out the reaction adenosine(37) in tRNA + dimethylallyl diphosphate = N(6)-dimethylallyladenosine(37) in tRNA + diphosphate. Functionally, catalyzes the transfer of a dimethylallyl group onto the adenine at position 37 in tRNAs that read codons beginning with uridine, leading to the formation of N6-(dimethylallyl)adenosine (i(6)A). This is tRNA dimethylallyltransferase from Nostoc sp. (strain PCC 7120 / SAG 25.82 / UTEX 2576).